We begin with the raw amino-acid sequence, 268 residues long: Ribosomal RNA large subunit methyltransferase E (268 aa).

The S-adenosyl-L-methionine site is built by Gly-50, Trp-52, Asp-68, Asp-84, and Asp-109. The active-site Proton acceptor is the Lys-149. The TRAM domain occupies 196-254; that stretch reads PLRKGDKFVVDIEKLGSSGDGAVLIEGFVVFVKEVEVGEKVRIKISDVKPNFAFADVEE.

This sequence belongs to the class I-like SAM-binding methyltransferase superfamily. RNA methyltransferase RlmE family.

Its subcellular location is the cytoplasm. The catalysed reaction is uridine(2552) in 23S rRNA + S-adenosyl-L-methionine = 2'-O-methyluridine(2552) in 23S rRNA + S-adenosyl-L-homocysteine + H(+). Its function is as follows. Specifically methylates the uridine in position 2552 of 23S rRNA at the 2'-O position of the ribose in the fully assembled 50S ribosomal subunit. The protein is Ribosomal RNA large subunit methyltransferase E of Methanosarcina mazei (strain ATCC BAA-159 / DSM 3647 / Goe1 / Go1 / JCM 11833 / OCM 88) (Methanosarcina frisia).